A 259-amino-acid polypeptide reads, in one-letter code: TCF3 fusion partner homolog (259 aa).

Disordered stretches follow at residues 51-72 (GLGDSGLRERDEEEEAARGRRR) and 141-210 (EDDG…APVQ). At serine 167 the chain carries Phosphoserine. Phosphothreonine is present on threonine 172. A phosphoserine mark is found at serine 180 and serine 188. Residue threonine 203 is modified to Phosphothreonine. Lysine 222 is covalently cross-linked (Glycyl lysine isopeptide (Lys-Gly) (interchain with G-Cter in SUMO2)). The interval 240–259 (VSRGPDKLLPYPTLASPPFD) is disordered. Phosphoserine is present on serine 255.

Interacts with NOL3; translocates NOL3 into the nucleus and negatively regulated TFPT-induced cell death. Component of the chromatin remodeling INO80 complex; specifically part of a complex module associated with the N-terminus of INO80. In terms of tissue distribution, ubiquitously expressed. Abundant in the brain.

It localises to the nucleus. Its function is as follows. Appears to promote apoptosis in a p53/TP53-independent manner. Functionally, putative regulatory component of the chromatin remodeling INO80 complex which is involved in transcriptional regulation, DNA replication and probably DNA repair. The polypeptide is TCF3 fusion partner homolog (Tfpt) (Rattus norvegicus (Rat)).